Reading from the N-terminus, the 335-residue chain is Large ribosomal subunit protein uL10 (335 aa).

A disordered region spans residues 300-335; the sequence is QVSEQAAEKKEEKKEEEKKGPSEEEIGGGLSSLFGG. Positions 305-321 are enriched in basic and acidic residues; it reads AAEKKEEKKEEEKKGPS. Positions 326–335 are enriched in gly residues; the sequence is GGGLSSLFGG.

Belongs to the universal ribosomal protein uL10 family. In terms of assembly, part of the 50S ribosomal subunit. Forms part of the ribosomal stalk which helps the ribosome interact with GTP-bound translation factors. Forms a heptameric L10(L12)2(L12)2(L12)2 complex, where L10 forms an elongated spine to which the L12 dimers bind in a sequential fashion.

In terms of biological role, forms part of the ribosomal stalk, playing a central role in the interaction of the ribosome with GTP-bound translation factors. The sequence is that of Large ribosomal subunit protein uL10 from Sulfolobus acidocaldarius (strain ATCC 33909 / DSM 639 / JCM 8929 / NBRC 15157 / NCIMB 11770).